A 120-amino-acid polypeptide reads, in one-letter code: Chaperonin GroEL (120 aa).

Asp23–Thr27 provides a ligand contact to ATP.

It belongs to the chaperonin (HSP60) family. Forms a cylinder of 14 subunits composed of two heptameric rings stacked back-to-back. Interacts with the co-chaperonin GroES.

It is found in the cytoplasm. It catalyses the reaction ATP + H2O + a folded polypeptide = ADP + phosphate + an unfolded polypeptide.. Its function is as follows. Together with its co-chaperonin GroES, plays an essential role in assisting protein folding. The GroEL-GroES system forms a nano-cage that allows encapsulation of the non-native substrate proteins and provides a physical environment optimized to promote and accelerate protein folding. The polypeptide is Chaperonin GroEL (Mycolicibacterium rhodesiae (Mycobacterium rhodesiae)).